The following is a 629-amino-acid chain: tRNA uridine 5-carboxymethylaminomethyl modification enzyme MnmG (629 aa).

Residue 13 to 18 participates in FAD binding; it reads GGGHAG. 273-287 is an NAD(+) binding site; sequence GPRYCPSIEDKIMRF.

It belongs to the MnmG family. As to quaternary structure, homodimer. Heterotetramer of two MnmE and two MnmG subunits. FAD serves as cofactor.

The protein resides in the cytoplasm. In terms of biological role, NAD-binding protein involved in the addition of a carboxymethylaminomethyl (cmnm) group at the wobble position (U34) of certain tRNAs, forming tRNA-cmnm(5)s(2)U34. This Tolumonas auensis (strain DSM 9187 / NBRC 110442 / TA 4) protein is tRNA uridine 5-carboxymethylaminomethyl modification enzyme MnmG.